We begin with the raw amino-acid sequence, 314 residues long: Cytochrome bo(3) ubiquinol oxidase subunit 2 (314 aa).

Residues 1-23 form the signal peptide; that stretch reads MSKKRYPRLFGILPFLGMLLLSG. Residue Cys-24 is the site of N-palmitoyl cysteine attachment. The S-diacylglycerol cysteine moiety is linked to residue Cys-24. The Periplasmic portion of the chain corresponds to 24–42; that stretch reads CNWTLLDPKGQVGIEQKNL. Residues 43–63 traverse the membrane as a helical segment; sequence ILIATGLMLLVVIPVIIMTVV. Residues 64 to 86 lie on the Cytoplasmic side of the membrane; the sequence is FAWKYRASNKAATYTPDWSHSTK. A helical transmembrane segment spans residues 87–107; the sequence is IEAAVWIIPILIIIALGYFTY. At 108–314 the chain is on the periplasmic side; that stretch reads HSTHKLDPYR…SMQPAAGAEE (207 aa). Residues 278-293 show a composition bias toward basic and acidic residues; it reads YEGMNRGRPSHEEAGS. The interval 278 to 314 is disordered; the sequence is YEGMNRGRPSHEEAGSKDLATTKGVESSMQPAAGAEE.

It belongs to the cytochrome c oxidase subunit 2 family. As to quaternary structure, heterooctamer of two A chains, two B chains, two C chains and two D chains.

The protein localises to the cell inner membrane. Functionally, cytochrome bo(3) ubiquinol terminal oxidase is the component of the aerobic respiratory chain of E.coli that predominates when cells are grown at high aeration. Has proton pump activity across the membrane in addition to electron transfer, pumping 2 protons/electron. This is Cytochrome bo(3) ubiquinol oxidase subunit 2 (cyoA) from Pseudomonas putida (Arthrobacter siderocapsulatus).